Consider the following 335-residue polypeptide: tRNA pseudouridine synthase D (335 aa).

Catalysis depends on Asp-77, which acts as the Nucleophile. Residues 152 to 308 (GFPNYFTEQR…AQNLNWQFEP (157 aa)) form the TRUD domain.

The protein belongs to the pseudouridine synthase TruD family.

The enzyme catalyses uridine(13) in tRNA = pseudouridine(13) in tRNA. Functionally, responsible for synthesis of pseudouridine from uracil-13 in transfer RNAs. The chain is tRNA pseudouridine synthase D from Actinobacillus succinogenes (strain ATCC 55618 / DSM 22257 / CCUG 43843 / 130Z).